Here is a 172-residue protein sequence, read N- to C-terminus: Thioredoxin M-type, chloroplastic (172 aa).

Residues 1 to 60 (MALESLFKSIHTKTSLSSSIVFIFKGKACLLTSKSRIQESFAELNSFTSLVLLIENHVLL) constitute a chloroplast transit peptide. One can recognise a Thioredoxin domain in the interval 61–172 (HAREAVNEVQ…TLSEKVEKYI (112 aa)). Catalysis depends on nucleophile residues Cys-97 and Cys-100. Cys-97 and Cys-100 are disulfide-bonded.

The protein belongs to the thioredoxin family. Plant M-type subfamily. Forms a complex with heterodimeric ferredoxin-thioredoxin reductase (FTR) and ferredoxin.

Its subcellular location is the plastid. The protein localises to the chloroplast. Participates in various redox reactions through the reversible oxidation of the active center dithiol to a disulfide. The M form is known to activate NADP-malate dehydrogenase. The protein is Thioredoxin M-type, chloroplastic of Pisum sativum (Garden pea).